Consider the following 425-residue polypeptide: Proline--tRNA ligase (425 aa).

The protein belongs to the class-II aminoacyl-tRNA synthetase family. ProS type 2 subfamily. Homodimer.

It localises to the cytoplasm. The enzyme catalyses tRNA(Pro) + L-proline + ATP = L-prolyl-tRNA(Pro) + AMP + diphosphate. Its function is as follows. Catalyzes the attachment of proline to tRNA(Pro) in a two-step reaction: proline is first activated by ATP to form Pro-AMP and then transferred to the acceptor end of tRNA(Pro). The sequence is that of Proline--tRNA ligase from Anaplasma marginale (strain St. Maries).